A 221-amino-acid chain; its full sequence is Glutathione peroxidase 6 (221 aa).

Positions 1 to 19 (MAQKLWGSCLFSLFMAALA) are cleaved as a signal peptide. Residue cysteine 73 is part of the active site.

Belongs to the glutathione peroxidase family.

It localises to the secreted. It carries out the reaction 2 glutathione + H2O2 = glutathione disulfide + 2 H2O. The sequence is that of Glutathione peroxidase 6 (Gpx6) from Mus musculus (Mouse).